Here is a 515-residue protein sequence, read N- to C-terminus: Tabersonine 6,7-epoxidase isoform 2 (515 aa).

The chain crosses the membrane as a helical span at residues 1–21; that stretch reads MEFVVSPFAFLIFFFILLKMI. N173, N259, and N352 each carry an N-linked (GlcNAc...) asparagine glycan. C449 contacts heme.

The protein belongs to the cytochrome P450 family. Requires heme as cofactor. Mainly expressed in aerial organs, including stems, leaves and flowers.

The protein resides in the endoplasmic reticulum membrane. It carries out the reaction (-)-tabersonine + reduced [NADPH--hemoprotein reductase] + O2 = lochnericine + oxidized [NADPH--hemoprotein reductase] + H2O + H(+). It participates in alkaloid biosynthesis. In terms of biological role, component of the monoterpenoid indole alkaloids (MIAs, e.g. echitovenine, tabersonine, lochnericine, 19-hydroxytabersonine and horhammericine) biosynthetic pathway; MIAs are used in cancer treatment and other medical applications. Cytochrome P450 catalyzing the conversion of tabersonine to lochnericine. The protein is Tabersonine 6,7-epoxidase isoform 2 of Catharanthus roseus (Madagascar periwinkle).